The sequence spans 342 residues: Oxygen-dependent coproporphyrinogen-III oxidase (342 aa).

Serine 98 contributes to the substrate binding site. Residues histidine 102 and histidine 112 each contribute to the a divalent metal cation site. The Proton donor role is filled by histidine 112. 114-116 (NYR) lines the substrate pocket. Histidine 146 and histidine 176 together coordinate a divalent metal cation. Residues 266–301 (YVEFNLVWDRGTIFGLQTNGRTESILMSLPPLARWE) form an important for dimerization region.

This sequence belongs to the aerobic coproporphyrinogen-III oxidase family. Homodimer. Requires a divalent metal cation as cofactor.

It is found in the cytoplasm. It catalyses the reaction coproporphyrinogen III + O2 + 2 H(+) = protoporphyrinogen IX + 2 CO2 + 2 H2O. Its pathway is porphyrin-containing compound metabolism; protoporphyrin-IX biosynthesis; protoporphyrinogen-IX from coproporphyrinogen-III (O2 route): step 1/1. Functionally, involved in the heme and chlorophyll biosynthesis. Catalyzes the aerobic oxidative decarboxylation of propionate groups of rings A and B of coproporphyrinogen-III to yield the vinyl groups in protoporphyrinogen-IX. This Prochlorococcus marinus (strain MIT 9515) protein is Oxygen-dependent coproporphyrinogen-III oxidase.